The following is a 324-amino-acid chain: MIFSKISQVAHYVPQQLVTNNDLASIMDTSHEWIFSRTGIAERHISRDEMTSDLAIQVADQLLTQSGLKANAIDFIIVATISPDATMPSTAAKVQAAIAATSAFAFDMTAACSGFVFALAMADKLIASGAYQNGMVIGAETLSKLVNWQDRATAVLFGDGAGGVLLEASKDKHVLAETLHTDGARCQSLISGETSLSSPYSIGKKAIATIQMDGRAIFDFAIRDVSKSILTLMAQSDITKDDIDYCLLHQANRRILDKIARKIDVPREKFLENMMRYGNTSAASIPILLSEAVQKGQIRLDGTQKILLSGFGGGLTWGSLIVKI.

Active-site residues include C112 and H249. Residues 250–254 (QANRR) form an ACP-binding region. Residue N279 is part of the active site.

This sequence belongs to the thiolase-like superfamily. FabH family. Homodimer.

It is found in the cytoplasm. It catalyses the reaction malonyl-[ACP] + acetyl-CoA + H(+) = 3-oxobutanoyl-[ACP] + CO2 + CoA. It functions in the pathway lipid metabolism; fatty acid biosynthesis. Functionally, catalyzes the condensation reaction of fatty acid synthesis by the addition to an acyl acceptor of two carbons from malonyl-ACP. Catalyzes the first condensation reaction which initiates fatty acid synthesis and may therefore play a role in governing the total rate of fatty acid production. Possesses both acetoacetyl-ACP synthase and acetyl transacylase activities. Its substrate specificity determines the biosynthesis of branched-chain and/or straight-chain of fatty acids. In Streptococcus pyogenes serotype M6 (strain ATCC BAA-946 / MGAS10394), this protein is Beta-ketoacyl-[acyl-carrier-protein] synthase III.